The sequence spans 286 residues: 4-hydroxybenzoate octaprenyltransferase (286 aa).

7 consecutive transmembrane segments (helical) span residues 20–40, 43–63, 83–103, 135–155, 160–180, 209–229, and 234–254; these read IGILLLLWPTLWGLWLAADGM, PMILVIFVLGTILMRSAGCAI, LATGIISSREALLVAAGLSLC, FFAMPQAYLGIAFSFGIPMAF, GTVPPLAWLLVLANLFWVIAY, VAGILLCHITFLSILTYAGIL, and IWFYGALLVALGLVIVQYTMI.

It belongs to the UbiA prenyltransferase family. Mg(2+) serves as cofactor.

It localises to the cell inner membrane. It carries out the reaction all-trans-octaprenyl diphosphate + 4-hydroxybenzoate = 4-hydroxy-3-(all-trans-octaprenyl)benzoate + diphosphate. Its pathway is cofactor biosynthesis; ubiquinone biosynthesis. Functionally, catalyzes the prenylation of para-hydroxybenzoate (PHB) with an all-trans polyprenyl group. Mediates the second step in the final reaction sequence of ubiquinone-8 (UQ-8) biosynthesis, which is the condensation of the polyisoprenoid side chain with PHB, generating the first membrane-bound Q intermediate 3-octaprenyl-4-hydroxybenzoate. This is 4-hydroxybenzoate octaprenyltransferase from Nitrosomonas eutropha (strain DSM 101675 / C91 / Nm57).